The chain runs to 339 residues: 5-dehydro-2-deoxygluconokinase (339 aa).

The protein belongs to the carbohydrate kinase PfkB family.

The catalysed reaction is 5-dehydro-2-deoxy-D-gluconate + ATP = 6-phospho-5-dehydro-2-deoxy-D-gluconate + ADP + H(+). It functions in the pathway polyol metabolism; myo-inositol degradation into acetyl-CoA; acetyl-CoA from myo-inositol: step 5/7. In terms of biological role, catalyzes the phosphorylation of 5-dehydro-2-deoxy-D-gluconate (2-deoxy-5-keto-D-gluconate or DKG) to 6-phospho-5-dehydro-2-deoxy-D-gluconate (DKGP). The sequence is that of 5-dehydro-2-deoxygluconokinase from Clostridium botulinum (strain Alaska E43 / Type E3).